Reading from the N-terminus, the 444-residue chain is Chitinase-like protein Idgf5 (444 aa).

Residues 1–26 (MMWIQKNPFLGLLLCSFLAFFQSTYA) form the signal peptide. The GH18 domain maps to 29 to 444 (GKLVCFYDAQ…PILRSIKFKL (416 aa)). Cys-33 and Cys-60 are joined by a disulfide. Asn-289 and Asn-311 each carry an N-linked (GlcNAc...) asparagine glycan. Cys-349 and Cys-429 form a disulfide bridge.

It belongs to the glycosyl hydrolase 18 family. IDGF subfamily. In terms of processing, glycosylated.

It localises to the secreted. In terms of biological role, probably required to stimulate the proliferation, polarization and motility of imaginal disk cells. May act by stabilizing the binding of insulin-like peptides to its receptor through a simultaneous interaction with both molecules to form a multiprotein signaling complex. This Drosophila melanogaster (Fruit fly) protein is Chitinase-like protein Idgf5 (Idgf5).